Here is a 624-residue protein sequence, read N- to C-terminus: Kelch-like protein diablo (624 aa).

Positions 1–21 (MGDPLLPGSTGLGSGPAAAAT) are enriched in low complexity. A disordered region spans residues 1-55 (MGDPLLPGSTGLGSGPAAAATGGSGTTGTGLGSGGTSGAERPPSPARLTHTSEKH). Residues 22–37 (GGSGTTGTGLGSGGTS) are compositionally biased toward gly residues. Positions 73–140 (CDVVLNVGGR…CYTAHIIVEE (68 aa)) constitute a BTB domain. In terms of domain architecture, BACK spans 175–277 (CLGIRAFADT…SPKFLVGTVG (103 aa)). Kelch repeat units lie at residues 324–370 (VLFA…VLND), 372–418 (LYAV…VLDG), 419–465 (FLYA…VLSG), 467–512 (LYAI…VFNN), 514–559 (IYAV…VVNG), and 560–606 (QLYA…VMRA).

Its pathway is protein modification; protein ubiquitination. In terms of biological role, probable substrate-specific adapter of an E3 ubiquitin-protein ligase complex which mediates the ubiquitination and subsequent proteasomal degradation of target proteins. May have a role in synapse differentiation and growth. The protein is Kelch-like protein diablo of Drosophila virilis (Fruit fly).